A 154-amino-acid polypeptide reads, in one-letter code: Transcriptional repressor NrdR (154 aa).

Residues 3-34 fold into a zinc finger; it reads CPFCNAPDTKVIDSRLATEGAQVRRRRECMSC. Residues 49-139 enclose the ATP-cone domain; it reads PRVIKSDGNR…VYRSFQDVNA (91 aa).

Belongs to the NrdR family. Zn(2+) is required as a cofactor.

Its function is as follows. Negatively regulates transcription of bacterial ribonucleotide reductase nrd genes and operons by binding to NrdR-boxes. This is Transcriptional repressor NrdR from Hydrogenovibrio crunogenus (strain DSM 25203 / XCL-2) (Thiomicrospira crunogena).